A 707-amino-acid polypeptide reads, in one-letter code: Mitochondrial disaggregase (707 aa).

A mitochondrion-targeting transit peptide spans Met1–Asn36. Residues Pro92–Cys126 form an autoinhibitory region. ANK repeat units lie at residues Asn133–Ala162, Leu166–Leu195, Lys265–Arg295, and Met298–Arg327. Residues His346, Ile348, Ser383, Gly384, Ile385, Gly386, Lys387, Thr388, Glu455, and Asn496 each coordinate ATP. Residues Leu507 to Thr535 are regulatory; slows ATPase and disaggregase activities. Residue Arg561 coordinates ATP. At Lys589 the chain carries N6-acetyllysine. ATP is bound at residue Arg620.

This sequence belongs to the ClpA/ClpB family. Homododecamer when substrate-bound; the homododecamer consists of 2 homohexamers stacked head-to-head via ANK repeat-mediated interactions. The active substrate-bound form is likely to exist in a dynamic equilibrium between homohexamers and homododecamers. Homotetradecamer in the unbound state which is remodeled upon substrate binding into the homododecamer. Interacts with PHB and PHB2. Interacts with MAVS; the interaction is enhanced by Sendai virus infection. In terms of processing, proteolytically cleaved by protease PARL. ATP-dependent protein disaggregase activity is stimulated by PARL-mediated cleavage of the N-terminal autoinhibitory peptide. In terms of tissue distribution, widely expressed (at protein level). Expressed in fetal, as well as in adult tissues, with highest levels in adult brain, including thalamus, hippocampus, occipital cortex and parietal cortex. Low expression in granulocytes.

The protein localises to the mitochondrion intermembrane space. The enzyme catalyses ATP + H2O = ADP + phosphate + H(+). Disaggregase activity is inhibited by ADP. In terms of biological role, functions as a regulatory ATPase and participates in secretion/protein trafficking process. Has ATP-dependent protein disaggregase activity and is required to maintain the solubility of key mitochondrial proteins. Involved in mitochondrial-mediated antiviral innate immunity, activates RIG-I-mediated signal transduction and production of IFNB1 and pro-inflammatory cytokine IL6. Plays a role in granulocyte differentiation. In Homo sapiens (Human), this protein is Mitochondrial disaggregase.